The primary structure comprises 666 residues: DNA-directed RNA polymerase subunit beta' (666 aa).

Positions 69, 71, 87, and 90 each coordinate Zn(2+). Mg(2+) is bound by residues Asp-489, Asp-491, and Asp-493.

This sequence belongs to the RNA polymerase beta' chain family. RpoC1 subfamily. In plastids the minimal PEP RNA polymerase catalytic core is composed of four subunits: alpha, beta, beta', and beta''. When a (nuclear-encoded) sigma factor is associated with the core the holoenzyme is formed, which can initiate transcription. Requires Mg(2+) as cofactor. Zn(2+) is required as a cofactor.

The protein resides in the plastid. It localises to the chloroplast. The catalysed reaction is RNA(n) + a ribonucleoside 5'-triphosphate = RNA(n+1) + diphosphate. In terms of biological role, DNA-dependent RNA polymerase catalyzes the transcription of DNA into RNA using the four ribonucleoside triphosphates as substrates. The sequence is that of DNA-directed RNA polymerase subunit beta' from Chara vulgaris (Common stonewort).